A 2474-amino-acid chain; its full sequence is Serine/threonine-protein kinase TOR2 (2474 aa).

The interval 1–62 (MNKYINKYTT…NGPNDSGRVI (62 aa)) is disordered. The residue at position 10 (threonine 10) is a Phosphothreonine. Residues 25–36 (HRTRKKLTHKSH) are compositionally biased toward basic residues. The segment covering 43–56 (STTSNTDSNHNGPN) has biased composition (polar residues). HEAT repeat units follow at residues 588–626 (YSLT…KDDI), 636–674 (HSVS…PQLA), 676–710 (PDNL…VNPA), 756–793 (PYID…VGGK), 797–835 (RYLK…SSGY), 841–879 (LDYP…LDPY), 917–955 (YYPT…NLGL), 1039–1076 (RFVP…FGPN), 1079–1116 (DYSH…NINL), 1118–1155 (EMSS…QLGT), and 1292–1331 (SYQE…DDKP). Residues 1338 to 1922 (TLGKYAQKCH…VYPLMVAIKS (585 aa)) enclose the FAT domain. The PI3K/PI4K catalytic domain occupies 2097-2421 (FEPVFSVISS…EHKNAIRNAR (325 aa)). Residues 2103 to 2109 (VISSKQR) form a G-loop region. Positions 2276–2284 (GLGDRHPSN) are catalytic loop. Positions 2296–2321 (HIDFGDCFEAAILREKFPEKVPFRLT) are activation loop. One can recognise an FATC domain in the interval 2442–2474 (NDLDVPEQVDKLIQQATSVENLCQHYIGWCPFW).

The protein belongs to the PI3/PI4-kinase family. The target of rapamycin complex 1 (TORC1) is composed of at least KOG1, LST8, TCO89 and either TOR1 (TORC1-A) or TOR2 (TORC1-B). TORC1 binds to and is inhibited by FKBP-rapamycin. Interacts with PIB2; following activation of PIB2 by glutamine. The target of rapamycin complex 2 (TORC2) is composed of at least AVO1, AVO2, BIT61, LST8, TOR2 and TSC11. TORC2 forms a homodimer. Contrary to TORC1, TORC2 does not bind to and is not sensitive to FKBP-rapamycin. Interacts with SLM1 and SLM2.

The protein resides in the cell membrane. It is found in the vacuole membrane. The catalysed reaction is L-seryl-[protein] + ATP = O-phospho-L-seryl-[protein] + ADP + H(+). The enzyme catalyses L-threonyl-[protein] + ATP = O-phospho-L-threonyl-[protein] + ADP + H(+). It catalyses the reaction a 1,2-diacyl-sn-glycero-3-phospho-(1D-myo-inositol) + ATP = a 1,2-diacyl-sn-glycero-3-phospho-(1D-myo-inositol 4-phosphate) + ADP + H(+). In terms of biological role, phosphatidylinositol 3-kinase homolog, component of both TORC1 and TORC2. TORC1 regulates multiple cellular processes to control cell growth in response to environmental signals. Nutrient limitation and environmental stress signals cause inactivation of TORC1. Active TORC1 positively controls ribosome biogenesis via control of rRNA, ribosomal protein and tRNA gene expression, and rRNA processing. TORC1 positively controls protein biosynthesis by regulation of mRNA stability, translation initiation factor activity, and high-affinity amino acid permeases that serve to provide amino acids for use by the translation machinery. TORC1 also promotes growth by sequestering a number of nutrient and general stress-responsive transcription factors in the cytoplasm. TORC1 negatively controls macroautophagy, a process to recycle surplus cytoplasmic mass under nutrient starvation conditions. TORC1 controls many of these processes via TIP41-TAP42-mediated inhibition of the type 2A-related phosphatases PP2A and SIT4. In nutrient-rich conditions, responsible for the phosphorylation of AGC S6 kinase (S6K) YPK3, activating YPK3 kinase activity and promoting phosphorylation of ribosomal protein S6. Phosphorylates kinase SCH9 at 6 amino acids in the C-terminus, activating SCH9 kinase activity to properly regulate ribosome biogenesis, translation initiation, and entry into stationary phase. TORC2 regulates cell cycle-dependent polarization of the actin-cytoskeleton, cell wall integrity, and receptor endocytosis. TORC2 controls polarity of the actin cytoskeleton, which is required for orienting the secretory pathway toward discrete growth sites, via the RHO1/PKC1/MAPK cell integrity pathway by activating the RHO1 guanine nucleotide exchange factor ROM2. TORC2 phosphorylates the AGC kinase YPK2, an upstream effector of the cell integrity pathway. TORC2 negatively regulates calcineurin-dependent stress signaling via phosphorylation of its effector SLM1-SLM2. This Saccharomyces cerevisiae (strain ATCC 204508 / S288c) (Baker's yeast) protein is Serine/threonine-protein kinase TOR2 (TOR2).